Here is a 90-residue protein sequence, read N- to C-terminus: Small ribosomal subunit protein bS20 (90 aa).

A disordered region spans residues 1–25; it reads MANSAQARKRARQAAKANSHNSALR.

The protein belongs to the bacterial ribosomal protein bS20 family.

Its function is as follows. Binds directly to 16S ribosomal RNA. This is Small ribosomal subunit protein bS20 from Burkholderia multivorans (strain ATCC 17616 / 249).